The primary structure comprises 333 residues: MASLKDKLITPVAQPATQPTSKVTVVGVGQVGMACAISVLEKGLCDELALVDVLEDKLKGEMMDLQHGSLFLKTNKIVAGKDYAVTANSKVVVVTAGVRQQEGESRLDLVQRNVNVFKFIIPQVVKYSPDCIILVVSNPVDILTYVTWKLSGLPKHRVIGSGCNLDSARFRFLMGERLGIHPSSCHGWILGEHGDSSVAVWSGVNVAGVSLQELNPAMGSDQDSEGWKQVHKQVVDSAYEVIKLKGYTNWAIGLSVADLLETIMKNLCRVHPVSTMVKGMYGIENEVFLSLPCVLGSVGLTSVINQKLKDSEVAQLQTSATTLWNVQKDLKDL.

NAD(+) contacts are provided by residues 29–57 (GQVG…LEDK) and arginine 99. Substrate is bound by residues arginine 106, asparagine 138, and arginine 169. Residue asparagine 138 participates in NAD(+) binding. Histidine 193 functions as the Proton acceptor in the catalytic mechanism. Threonine 248 provides a ligand contact to substrate.

The protein belongs to the LDH/MDH superfamily. LDH family. Homotetramer.

It localises to the cytoplasm. It carries out the reaction (S)-lactate + NAD(+) = pyruvate + NADH + H(+). The protein operates within fermentation; pyruvate fermentation to lactate; (S)-lactate from pyruvate: step 1/1. In terms of biological role, interconverts simultaneously and stereospecifically pyruvate and lactate with concomitant interconversion of NADH and NAD(+). The sequence is that of L-lactate dehydrogenase B chain (LDHB) from Sceloporus woodi (Florida scrub lizard).